A 230-amino-acid chain; its full sequence is Protein-L-isoaspartate O-methyltransferase (230 aa).

Ser65 is a catalytic residue.

It belongs to the methyltransferase superfamily. L-isoaspartyl/D-aspartyl protein methyltransferase family. In terms of assembly, monomer. Highest contents in seeds.

It localises to the cytoplasm. The enzyme catalyses [protein]-L-isoaspartate + S-adenosyl-L-methionine = [protein]-L-isoaspartate alpha-methyl ester + S-adenosyl-L-homocysteine. Catalyzes the methyl esterification of L-isoaspartyl residues in peptides and proteins that result from spontaneous decomposition of normal L-aspartyl and L-asparaginyl residues. It plays a role in the repair and/or degradation of damaged proteins. This enzyme does not act on D-aspartyl residues. The sequence is that of Protein-L-isoaspartate O-methyltransferase (PCM) from Triticum aestivum (Wheat).